The primary structure comprises 394 residues: UDP-glucose 6-dehydrogenase (394 aa).

NAD(+)-binding positions include 2–19 (KIAI…AVLL), valine 11, aspartate 29, lysine 34, threonine 83, threonine 118, and glutamate 145. Substrate-binding positions include 141 to 145 (EFLRE), lysine 203, asparagine 207, 248 to 252 (YNNPS), and glycine 256. Tyrosine 258 is an NAD(+) binding site. Cysteine 259 acts as the Nucleophile in catalysis. Residue lysine 262 participates in NAD(+) binding. Residue lysine 313 participates in substrate binding. Arginine 320 contributes to the NAD(+) binding site.

Belongs to the UDP-glucose/GDP-mannose dehydrogenase family.

The catalysed reaction is UDP-alpha-D-glucose + 2 NAD(+) + H2O = UDP-alpha-D-glucuronate + 2 NADH + 3 H(+). It functions in the pathway nucleotide-sugar biosynthesis; UDP-alpha-D-glucuronate biosynthesis; UDP-alpha-D-glucuronate from UDP-alpha-D-glucose: step 1/1. Functionally, catalyzes the formation of UDP-glucuronic acid which is required for capsular hyaluronic acid synthesis. Directly responsible for the transformation of some unencapsulated serotype-3 SP mutants to the encapsulated phenotype. The polypeptide is UDP-glucose 6-dehydrogenase (cap3A) (Streptococcus pneumoniae).